Reading from the N-terminus, the 235-residue chain is Ribonuclease PH (235 aa).

Residues Arg86 and 124 to 126 (GTR) contribute to the phosphate site.

Belongs to the RNase PH family. Homohexameric ring arranged as a trimer of dimers.

It catalyses the reaction tRNA(n+1) + phosphate = tRNA(n) + a ribonucleoside 5'-diphosphate. Its function is as follows. Phosphorolytic 3'-5' exoribonuclease that plays an important role in tRNA 3'-end maturation. Removes nucleotide residues following the 3'-CCA terminus of tRNAs; can also add nucleotides to the ends of RNA molecules by using nucleoside diphosphates as substrates, but this may not be physiologically important. Probably plays a role in initiation of 16S rRNA degradation (leading to ribosome degradation) during starvation. This chain is Ribonuclease PH, found in Legionella pneumophila (strain Corby).